A 700-amino-acid polypeptide reads, in one-letter code: Elongation factor G 2 (700 aa).

A tr-type G domain is found at 8-290 (ERYRNIGISA…AVIDFLPSPV (283 aa)). GTP is bound by residues 17–24 (AHIDAGKT), 88–92 (DTPGH), and 142–145 (NKMD).

Belongs to the TRAFAC class translation factor GTPase superfamily. Classic translation factor GTPase family. EF-G/EF-2 subfamily.

The protein localises to the cytoplasm. Catalyzes the GTP-dependent ribosomal translocation step during translation elongation. During this step, the ribosome changes from the pre-translocational (PRE) to the post-translocational (POST) state as the newly formed A-site-bound peptidyl-tRNA and P-site-bound deacylated tRNA move to the P and E sites, respectively. Catalyzes the coordinated movement of the two tRNA molecules, the mRNA and conformational changes in the ribosome. This Burkholderia mallei (strain ATCC 23344) protein is Elongation factor G 2.